Here is a 535-residue protein sequence, read N- to C-terminus: Dimethylaniline monooxygenase [N-oxide-forming] 2 (535 aa).

An N-acetylalanine modification is found at A2. FAD is bound by residues 9 to 13 (GAGVS), E32, 40 to 41 (LW), and 61 to 62 (NT). Residues 60 to 61 (TN) and 195 to 198 (SASD) each bind NADP(+). A Glycyl lysine isopeptide (Lys-Gly) (interchain with G-Cter in SUMO) cross-link involves residue K492. Residues 510–530 (LSASFLMKILALVAVFVAFFS) traverse the membrane as a helical segment.

It belongs to the FMO family. The cofactor is FAD. Mg(2+) serves as cofactor. Lung.

Its subcellular location is the microsome membrane. It localises to the endoplasmic reticulum membrane. Functionally, catalyzes the oxidative metabolism of numerous xenobiotics, including mainly therapeutic drugs and insecticides that contain a soft nucleophile, most commonly nitrogen and sulfur and participates to their bioactivation. The protein is Dimethylaniline monooxygenase [N-oxide-forming] 2 of Cavia porcellus (Guinea pig).